We begin with the raw amino-acid sequence, 432 residues long: DNA damage-binding protein 2 (432 aa).

The interval 1 to 31 (MAPKKCPETQKSPDVAVLLRSKSRRGPQELE) is disordered. N6-acetyllysine occurs at positions 35 and 77. Required for interaction with DDB1 regions lie at residues 68–79 (SIVRDLYQHKLG) and 87–98 (QQGLQKSFLHSL). WD repeat units follow at residues 116–151 (SLAWHPTHPSTLAVGSKGGDIMIWNFGIKDKPIFLK), 159–194 (ITGLKFNHLNTNQFFASSMEGTTRLQDFKGNILRVY), 203–238 (WFCSLDVSAKSRVVVTGDNMGHVILLSTDGKELWNL), 244–287 (KVAH…SLPH), and 290–329 (PVNAACFSPDGARLLTTDQNNEIRVYSASQWDSPLNLISH). The DWD box motif lies at 256-274 (WLLATASIDQTVKIWDLRQ). Residues 334–336 (FQH) are photolesion recognition. WD repeat units follow at residues 343 to 386 (TWHS…MCQL) and 396 to 420 (SLNEFNPMGDTLASTMGYHILIWSQ).

The protein belongs to the WD repeat DDB2/WDR76 family. In terms of assembly, component of the UV-DDB complex which includes DDB1 and DDB2. The UV-DDB complex interacts with monoubiquitinated histone H2A and binds to XPC via the DDB2 subunit. Component of the DCX (DDB1-CUL4-X-box) E3 ubiquitin-protein ligase complex DDB1-CUL4-ROC1 (also known as CUL4-DDB-ROC1 and CUL4-DDB-RBX1), which includes CUL4A or CUL4B, DDB1, DDB2 and RBX1. DDB2 may function as the substrate recognition module within this complex. The DDB1-CUL4-ROC1 complex may associate with the COP9 signalosome, and this inhibits the E3 ubiquitin-protein ligase activity of the complex. A large number of other DCX complexes may also exist in which an alternate substrate targeting subunit replaces DDB2. These targeting subunits are generally known as DCAF (DDB1- and CUL4-associated factor) or CDW (CUL4-DDB1-associated WD40-repeat) proteins. Post-translationally, phosphorylation by ABL1 negatively regulate UV-DDB activity. Ubiquitinated by CUL4A in response to UV irradiation. Ubiquitination appears to both impair DNA-binding and promotes ubiquitin-dependent proteolysis. Degradation of DDB2 at sites of DNA damage may be a prerequisite for their recognition by XPC and subsequent repair. CUL4A-mediated degradation appears to be promoted by ABL1. In terms of processing, ubiquitinated, leading to proteasomal degradation, and deubiquitinated by USP24. Deubiquitinated by USP44; leading to its stabilization on DNA lesions. Post-translationally, acetylated. Deacetylation by SIRT6 in response to UV stress facilitates nucleotide excision repair pathway (the NER pathway) transduction. Expressed in bone marrow, liver, lung, muscle, pancreas and spleen.

It is found in the nucleus. The protein localises to the chromosome. It functions in the pathway protein modification; protein ubiquitination. Protein, which is both involved in DNA repair and protein ubiquitination, as part of the UV-DDB complex and DCX (DDB1-CUL4-X-box) complexes, respectively. Core component of the UV-DDB complex (UV-damaged DNA-binding protein complex), a complex that recognizes UV-induced DNA damage and recruit proteins of the nucleotide excision repair pathway (the NER pathway) to initiate DNA repair. The UV-DDB complex preferentially binds to cyclobutane pyrimidine dimers (CPD), 6-4 photoproducts (6-4 PP), apurinic sites and short mismatches. Also functions as the substrate recognition module for the DCX (DDB2-CUL4-X-box) E3 ubiquitin-protein ligase complex DDB2-CUL4-ROC1 (also known as CUL4-DDB-ROC1 and CUL4-DDB-RBX1). The DDB2-CUL4-ROC1 complex may ubiquitinate histone H2A, histone H3 and histone H4 at sites of UV-induced DNA damage. The ubiquitination of histones may facilitate their removal from the nucleosome and promote subsequent DNA repair. The DDB2-CUL4-ROC1 complex also ubiquitinates XPC, which may enhance DNA-binding by XPC and promote NER. The DDB2-CUL4-ROC1 complex also ubiquitinates KAT7/HBO1 in response to DNA damage, leading to its degradation: recognizes KAT7/HBO1 following phosphorylation by ATR. In Mus musculus (Mouse), this protein is DNA damage-binding protein 2 (Ddb2).